The following is a 160-amino-acid chain: uncharacterized protein (160 aa).

The stretch at asparagine 69 to arginine 145 forms a coiled coil. 2 disordered regions span residues glycine 82–alanine 109 and lysine 129–lysine 160. The segment covering glutamine 86–glutamine 99 has biased composition (basic residues). A compositionally biased stretch (basic and acidic residues) spans isoleucine 133–tyrosine 146. The span at methionine 147–lysine 160 shows a compositional bias: basic residues.

This is an uncharacterized protein from Bacillus subtilis (strain 168).